The primary structure comprises 406 residues: Putative cyclin-F3-2 (406 aa).

The segment at 1-107 (MARPRTRSVA…PGAAGGPWQL (107 aa)) is disordered. Low complexity-rich tracts occupy residues 11 to 21 (RMEATAAAAAA) and 29 to 57 (NPDG…NAGE).

The protein belongs to the cyclin family. Cyclin F subfamily.

The polypeptide is Putative cyclin-F3-2 (CYCF3-2) (Oryza sativa subsp. japonica (Rice)).